We begin with the raw amino-acid sequence, 1083 residues long: Voltage-gated inwardly rectifying potassium channel KCNH3 (1083 aa).

The Cytoplasmic segment spans residues Met1–Asp228. In terms of domain architecture, PAS spans Ile18–His90. In terms of domain architecture, PAC spans Phe93–Trp145. Over residues Lys137–Gly150 the composition is skewed to basic and acidic residues. The segment at Lys137–Arg157 is disordered. A helical transmembrane segment spans residues Gly229 to Ser249. The Extracellular segment spans residues Thr250–Gly259. A helical transmembrane segment spans residues Pro260–Phe280. The Cytoplasmic portion of the chain corresponds to Arg281–Tyr302. A helical membrane pass occupies residues Val303–Phe323. At Lys324–Ala331 the chain is on the extracellular side. A helical; Voltage-sensor membrane pass occupies residues His332–Tyr352. The Cytoplasmic segment spans residues Ser353–Thr361. A helical transmembrane segment spans residues Leu362–Gly382. Topologically, residues Gln383–Ile453 are extracellular. N-linked (GlcNAc...) asparagine glycosylation is found at Asn421, Asn428, and Asn436. The segment at residues Thr454 to Asn474 is an intramembrane region (pore-forming). The Selectivity filter motif lies at Ser465 to Asn470. Residues Thr475–Lys479 are Extracellular-facing. Residues Ile480–Val500 traverse the membrane as a helical segment. The Cytoplasmic segment spans residues Thr501–Val1083. Residue Leu582 to Arg697 participates in a nucleoside 3',5'-cyclic phosphate binding. Disordered stretches follow at residues Glu729 to Pro810, Cys832 to Arg873, and Met972 to Trp1055. Residues Thr773–Pro785 show a composition bias toward basic residues. The segment covering Gly844–Gly861 has biased composition (low complexity).

This sequence belongs to the potassium channel family. H (Eag) (TC 1.A.1.20) subfamily. Kv12.2/KCNH3 sub-subfamily. The potassium channel is probably composed of a homo- or heterotetrameric complex of pore-forming alpha subunits that can associate with modulating beta subunits. Interacts with KCNE1 and KCNE3; these interactions regulate KCNH3 trafficking to the plasma membrane and its subsequent voltage-gated potassium channel activity. In terms of processing, N-glycosylated. N-glycosylation mediates traffick to the cell membrane but is not necessary for voltage-gated potassium channel activity. As to expression, detected only in brain, in particular in the telencephalon. Detected in the cerebral cortex, occipital pole, frontal and temporal lobe, putamen, amygdala, hippocampus and caudate nucleus.

It localises to the cell membrane. It carries out the reaction K(+)(in) = K(+)(out). In terms of biological role, pore-forming (alpha) subunit of a voltage-gated inwardly rectifying potassium channel. Charactherized by a fast rate of activation during depolarization followed by a rapid inactivation at much more depolarized value causing inward rectification due to a C-type inactivation mechanism. Exhibits a rapid recovery from inactivation. In Homo sapiens (Human), this protein is Voltage-gated inwardly rectifying potassium channel KCNH3.